Here is a 119-residue protein sequence, read N- to C-terminus: DNA-directed RNA polymerase subunit omega (119 aa).

Belongs to the RNA polymerase subunit omega family. As to quaternary structure, the RNAP catalytic core consists of 2 alpha, 1 beta, 1 beta' and 1 omega subunit. When a sigma factor is associated with the core the holoenzyme is formed, which can initiate transcription.

The enzyme catalyses RNA(n) + a ribonucleoside 5'-triphosphate = RNA(n+1) + diphosphate. Its function is as follows. Promotes RNA polymerase assembly. Latches the N- and C-terminal regions of the beta' subunit thereby facilitating its interaction with the beta and alpha subunits. This chain is DNA-directed RNA polymerase subunit omega, found in Caulobacter sp. (strain K31).